An 862-amino-acid chain; its full sequence is Valine--tRNA ligase (862 aa).

The short motif at 44-53 (NVTGSLHMGH) is the 'HIGH' region element. Positions 176, 179, 344, 347, 417, 420, 438, and 441 each coordinate Zn(2+). The short motif at 528–532 (KMSKS) is the 'KMSKS' region element. Residue Lys531 participates in ATP binding. A coiled-coil region spans residues 802–862 (RRRQEKRLKE…RIREALSQIG (61 aa)).

Belongs to the class-I aminoacyl-tRNA synthetase family. ValS type 1 subfamily. In terms of assembly, monomer. Zn(2+) is required as a cofactor.

It is found in the cytoplasm. It catalyses the reaction tRNA(Val) + L-valine + ATP = L-valyl-tRNA(Val) + AMP + diphosphate. In terms of biological role, catalyzes the attachment of valine to tRNA(Val). As ValRS can inadvertently accommodate and process structurally similar amino acids such as threonine, to avoid such errors, it has a 'posttransfer' editing activity that hydrolyzes mischarged Thr-tRNA(Val) in a tRNA-dependent manner. This chain is Valine--tRNA ligase, found in Thermus thermophilus (strain ATCC 27634 / DSM 579 / HB8).